Here is a 358-residue protein sequence, read N- to C-terminus: UDP-N-acetylglucosamine--N-acetylmuramyl-(pentapeptide) pyrophosphoryl-undecaprenol N-acetylglucosamine transferase (358 aa).

Residues 11 to 13 (TGG), N120, R161, S188, and Q282 each bind UDP-N-acetyl-alpha-D-glucosamine.

The protein belongs to the glycosyltransferase 28 family. MurG subfamily.

Its subcellular location is the cell inner membrane. It catalyses the reaction di-trans,octa-cis-undecaprenyl diphospho-N-acetyl-alpha-D-muramoyl-L-alanyl-D-glutamyl-meso-2,6-diaminopimeloyl-D-alanyl-D-alanine + UDP-N-acetyl-alpha-D-glucosamine = di-trans,octa-cis-undecaprenyl diphospho-[N-acetyl-alpha-D-glucosaminyl-(1-&gt;4)]-N-acetyl-alpha-D-muramoyl-L-alanyl-D-glutamyl-meso-2,6-diaminopimeloyl-D-alanyl-D-alanine + UDP + H(+). Its pathway is cell wall biogenesis; peptidoglycan biosynthesis. Its function is as follows. Cell wall formation. Catalyzes the transfer of a GlcNAc subunit on undecaprenyl-pyrophosphoryl-MurNAc-pentapeptide (lipid intermediate I) to form undecaprenyl-pyrophosphoryl-MurNAc-(pentapeptide)GlcNAc (lipid intermediate II). This is UDP-N-acetylglucosamine--N-acetylmuramyl-(pentapeptide) pyrophosphoryl-undecaprenol N-acetylglucosamine transferase from Synechococcus sp. (strain CC9311).